Reading from the N-terminus, the 474-residue chain is UDP-N-acetylmuramate--L-alanine ligase (474 aa).

108–114 (GTHGKTT) lines the ATP pocket.

It belongs to the MurCDEF family.

It localises to the cytoplasm. It catalyses the reaction UDP-N-acetyl-alpha-D-muramate + L-alanine + ATP = UDP-N-acetyl-alpha-D-muramoyl-L-alanine + ADP + phosphate + H(+). Its pathway is cell wall biogenesis; peptidoglycan biosynthesis. In terms of biological role, cell wall formation. The chain is UDP-N-acetylmuramate--L-alanine ligase from Chloroflexus aggregans (strain MD-66 / DSM 9485).